A 1758-amino-acid polypeptide reads, in one-letter code: RanBP2-like and GRIP domain-containing protein 3 (1758 aa).

Phosphoserine is present on serine 21. The stretch at 60–93 is one TPR 1 repeat; the sequence is PRAHRFLGLLYELEENTEKAVECYRRSVELNPTQ. Residues 176–229 adopt a coiled-coil conformation; that stretch reads RSTKRLKDAVARCHEAERNIALRSSLEWNSCVVQTLKEYLESLQCLESDKSDWR. One copy of the TPR 2 repeat lies at 584-617; sequence QKMGSGLNSFYDQREYIGRSVHYWKKVLPLLKII. Residues 761 to 805 are disordered; it reads GPLYKNGSLRNADSEIKHSTPSPTKYSLSPSKSYKYSPKTPPRWA. A compositionally biased stretch (low complexity) spans 779 to 798; that stretch reads STPSPTKYSLSPSKSYKYSP. The stretch at 805–837 forms a coiled coil; the sequence is AEDQNSLLKMIRQEVKAIKEEMQELKLNSSKSA. Residues 1037-1173 form the RanBD1 1 domain; that stretch reads HFEPVVQMPE…FEECQRLLLD (137 aa). 3 disordered regions span residues 1216–1248, 1307–1335, and 1581–1622; these read VAEE…PTLE, AKLN…GQYF, and NNSE…KNLS. Polar residues predominate over residues 1236–1245; that stretch reads IKPNAENTGP. The span at 1318 to 1330 shows a compositional bias: acidic residues; it reads TDEESDVTQEEER. The 137-residue stretch at 1334–1470 folds into the RanBD1 2 domain; the sequence is YFEPVVPLPD…FDEAKTAQEK (137 aa). Over residues 1581–1594 the composition is skewed to polar residues; the sequence is NNSETSSVAQSGSE. Positions 1595–1618 are enriched in basic and acidic residues; it reads SKVEPKKCELSKNSDIEQSSDSKV. In terms of domain architecture, GRIP spans 1703–1753; the sequence is QEVSAANVEHLKNVLLQFIFLKPGSERERLLPVINTMLQLSLEEKGKLAAV.

This Homo sapiens (Human) protein is RanBP2-like and GRIP domain-containing protein 3 (RGPD3).